A 269-amino-acid polypeptide reads, in one-letter code: Probable ribosomal RNA small subunit methyltransferase A (269 aa).

The S-adenosyl-L-methionine site is built by His23, Leu25, Gly50, Glu71, Asp95, and Asn110.

It belongs to the class I-like SAM-binding methyltransferase superfamily. rRNA adenine N(6)-methyltransferase family. RsmA subfamily.

Its subcellular location is the cytoplasm. Specifically dimethylates two adjacent adenosines in the loop of a conserved hairpin near the 3'-end of 16S rRNA in the 30S particle. May play a critical role in biogenesis of 30S subunits. The protein is Probable ribosomal RNA small subunit methyltransferase A of Pyrococcus abyssi (strain GE5 / Orsay).